A 118-amino-acid chain; its full sequence is Large ribosomal subunit protein uL22 (118 aa).

It belongs to the universal ribosomal protein uL22 family. In terms of assembly, part of the 50S ribosomal subunit.

Its function is as follows. This protein binds specifically to 23S rRNA; its binding is stimulated by other ribosomal proteins, e.g. L4, L17, and L20. It is important during the early stages of 50S assembly. It makes multiple contacts with different domains of the 23S rRNA in the assembled 50S subunit and ribosome. The globular domain of the protein is located near the polypeptide exit tunnel on the outside of the subunit, while an extended beta-hairpin is found that lines the wall of the exit tunnel in the center of the 70S ribosome. This Pediococcus pentosaceus (strain ATCC 25745 / CCUG 21536 / LMG 10740 / 183-1w) protein is Large ribosomal subunit protein uL22.